A 358-amino-acid chain; its full sequence is 3-isopropylmalate dehydrogenase (358 aa).

NAD(+) is bound at residue 77–90; it reads GPKWDNLPIDQRPE. Arg98, Arg108, Arg137, and Asp221 together coordinate substrate. Asp221, Asp245, and Asp249 together coordinate Mg(2+). 279–291 contacts NAD(+); sequence GSAPDIAHLNIAN.

Belongs to the isocitrate and isopropylmalate dehydrogenases family. LeuB type 1 subfamily. As to quaternary structure, homodimer. It depends on Mg(2+) as a cofactor. Mn(2+) serves as cofactor.

It localises to the cytoplasm. The enzyme catalyses (2R,3S)-3-isopropylmalate + NAD(+) = 4-methyl-2-oxopentanoate + CO2 + NADH. Its pathway is amino-acid biosynthesis; L-leucine biosynthesis; L-leucine from 3-methyl-2-oxobutanoate: step 3/4. Catalyzes the oxidation of 3-carboxy-2-hydroxy-4-methylpentanoate (3-isopropylmalate) to 3-carboxy-4-methyl-2-oxopentanoate. The product decarboxylates to 4-methyl-2 oxopentanoate. This Campylobacter jejuni (strain RM1221) protein is 3-isopropylmalate dehydrogenase.